We begin with the raw amino-acid sequence, 82 residues long: U1-plectoxin-Pt1a (82 aa).

Residues 1-20 (MKHLIFSSALVCALVVCTFA) form the signal peptide. The propeptide occupies 21–33 (EEQVNVPFLPDER). 5 cysteine pairs are disulfide-bonded: cysteine 37/cysteine 51, cysteine 44/cysteine 57, cysteine 50/cysteine 68, cysteine 54/cysteine 77, and cysteine 59/cysteine 66. Residue serine 79 is the site of O-palmitoyl serine attachment. Positions 80-82 (RRR) are excised as a propeptide.

It belongs to the neurotoxin 02 (plectoxin) family. 02 (plectoxin) subfamily. In terms of processing, plectoxin-5 presumably undergoes post-translational modification to give rise to plectoxin-6. As to expression, expressed by the venom gland.

The protein resides in the secreted. Potent toxin that may paralyze and/or kill insect pests such as H.virescens (lepidoptera), S.exigua (beet armyworm) and M.sexta (tobacco hornworm). This is U1-plectoxin-Pt1a from Plectreurys tristis (Spider).